A 354-amino-acid chain; its full sequence is Inositol-tetrakisphosphate 1-kinase 1 (354 aa).

Over residues 1–16 (MRVHEEASEDKEREVE) the composition is skewed to basic and acidic residues. The segment at 1-24 (MRVHEEASEDKEREVEEAPDLMPL) is disordered. Residues K53 and K95 each coordinate 1D-myo-inositol 1,3,4-trisphosphate. Residues R130 and K180 each contribute to the ATP site. In terms of domain architecture, ATP-grasp spans 140–347 (LNLSNAYGEV…FLLSLVQNKY (208 aa)). 1D-myo-inositol 1,3,4-trisphosphate-binding residues include H191 and K223. ATP-binding positions include 212 to 223 (QEFVNHGGILFK) and S238. Mg(2+) is bound by residues D303, D318, and N320. N320 is a 1D-myo-inositol 1,3,4-trisphosphate binding site.

It belongs to the ITPK1 family. Monomer. Requires Mg(2+) as cofactor. In terms of tissue distribution, expressed in roots, leaves, flowers, anthers and embryos.

The enzyme catalyses 1D-myo-inositol 3,4,5,6-tetrakisphosphate + ATP = 1D-myo-inositol 1,3,4,5,6-pentakisphosphate + ADP + H(+). It carries out the reaction 1D-myo-inositol 1,3,4-trisphosphate + ATP = 1D-myo-inositol 1,3,4,5-tetrakisphosphate + ADP + H(+). It catalyses the reaction 1D-myo-inositol 1,3,4-trisphosphate + ATP = 1D-myo-inositol 1,3,4,6-tetrakisphosphate + ADP + H(+). In terms of biological role, kinase that can phosphorylate various inositol polyphosphate such as Ins(3,4,5,6)P4 or Ins(1,3,4)P3 and participates in phytic acid biosynthesis in developing seeds. Phytic acid is the primary storage form of phosphorus in cereal grains and other plant seeds. In Oryza sativa subsp. japonica (Rice), this protein is Inositol-tetrakisphosphate 1-kinase 1.